The primary structure comprises 320 residues: Cytochrome f (320 aa).

The first 35 residues, Met-1–Ala-35, serve as a signal peptide directing secretion. The heme site is built by Tyr-36, Cys-56, Cys-59, and His-60. Residues Val-286–Lys-306 form a helical membrane-spanning segment.

It belongs to the cytochrome f family. As to quaternary structure, the 4 large subunits of the cytochrome b6-f complex are cytochrome b6, subunit IV (17 kDa polypeptide, petD), cytochrome f and the Rieske protein, while the 4 small subunits are PetG, PetL, PetM and PetN. The complex functions as a dimer. The cofactor is heme.

Its subcellular location is the plastid. The protein resides in the chloroplast thylakoid membrane. Functionally, component of the cytochrome b6-f complex, which mediates electron transfer between photosystem II (PSII) and photosystem I (PSI), cyclic electron flow around PSI, and state transitions. The polypeptide is Cytochrome f (Barbarea verna (Land cress)).